The sequence spans 180 residues: Hypoxanthine-guanine phosphoribosyltransferase (180 aa).

Diphosphate is bound by residues Lys-43 and Gly-44. Positions 99 and 100 each coordinate Mg(2+). The Proton acceptor role is filled by Asp-103. Residues Lys-131, Phe-152–Ile-153, and Asp-159 contribute to the GMP site. A diphosphate-binding site is contributed by Arg-165.

This sequence belongs to the purine/pyrimidine phosphoribosyltransferase family. Requires Mg(2+) as cofactor.

It localises to the cytoplasm. It catalyses the reaction IMP + diphosphate = hypoxanthine + 5-phospho-alpha-D-ribose 1-diphosphate. It carries out the reaction GMP + diphosphate = guanine + 5-phospho-alpha-D-ribose 1-diphosphate. The protein operates within purine metabolism; IMP biosynthesis via salvage pathway; IMP from hypoxanthine: step 1/1. Its pathway is purine metabolism; GMP biosynthesis via salvage pathway; GMP from guanine: step 1/1. Its function is as follows. Purine salvage pathway enzyme that catalyzes the transfer of the ribosyl-5-phosphate group from 5-phospho-alpha-D-ribose 1-diphosphate (PRPP) to the N9 position of the 6-oxopurines hypoxanthine and guanine to form the corresponding ribonucleotides IMP (inosine 5'-monophosphate) and GMP (guanosine 5'-monophosphate), with the release of PPi. In Streptococcus pyogenes serotype M3 (strain ATCC BAA-595 / MGAS315), this protein is Hypoxanthine-guanine phosphoribosyltransferase (hpt).